A 439-amino-acid polypeptide reads, in one-letter code: Adenylosuccinate synthetase (439 aa).

Residues 25–31 (GDEGKGK), 53–55 (GHT), and K62 each bind GTP. D26 serves as the catalytic Proton acceptor. Mg(2+)-binding residues include D26 and G53. IMP-binding positions include 26-29 (DEGK) and 51-54 (NAGH). H54 functions as the Proton donor in the catalytic mechanism. Residues T141, R155, N232, and T247 each coordinate IMP. T307 lines the GTP pocket. 307–313 (TTTNRPR) contributes to the substrate binding site. Residue R311 participates in IMP binding. GTP is bound by residues R313, 339–341 (KLD), and 425–427 (GVG).

This sequence belongs to the adenylosuccinate synthetase family. In terms of assembly, homodimer. Mg(2+) is required as a cofactor.

The protein localises to the cytoplasm. It carries out the reaction IMP + L-aspartate + GTP = N(6)-(1,2-dicarboxyethyl)-AMP + GDP + phosphate + 2 H(+). The protein operates within purine metabolism; AMP biosynthesis via de novo pathway; AMP from IMP: step 1/2. In terms of biological role, plays an important role in the salvage pathway for purine nucleotide biosynthesis. Catalyzes the first committed step in the biosynthesis of AMP from IMP. This is Adenylosuccinate synthetase from Plasmodium yoelii yoelii.